The primary structure comprises 168 residues: Endoribonuclease YbeY (168 aa).

Residues histidine 126, histidine 130, and histidine 136 each coordinate Zn(2+).

Belongs to the endoribonuclease YbeY family. Zn(2+) serves as cofactor.

It localises to the cytoplasm. Single strand-specific metallo-endoribonuclease involved in late-stage 70S ribosome quality control and in maturation of the 3' terminus of the 16S rRNA. The protein is Endoribonuclease YbeY of Rhizobium meliloti (strain 1021) (Ensifer meliloti).